A 129-amino-acid chain; its full sequence is Glycine cleavage system H protein (129 aa).

Positions 23-104 (TATIGITQHA…AYAAWLFRLK (82 aa)) constitute a Lipoyl-binding domain. K64 is subject to N6-lipoyllysine.

It belongs to the GcvH family. As to quaternary structure, the glycine cleavage system is composed of four proteins: P, T, L and H. Requires (R)-lipoate as cofactor.

In terms of biological role, the glycine cleavage system catalyzes the degradation of glycine. The H protein shuttles the methylamine group of glycine from the P protein to the T protein. The sequence is that of Glycine cleavage system H protein from Nitrosospira multiformis (strain ATCC 25196 / NCIMB 11849 / C 71).